We begin with the raw amino-acid sequence, 424 residues long: Caspase-2 (424 aa).

The propeptide occupies 1-140; it reads MLGACGMQRY…IVEHSLDSGD (140 aa). One can recognise a CARD domain in the interval 7–96; that stretch reads MQRYHQEALK…QHLAEMILKT (90 aa). Active-site residues include histidine 248 and cysteine 291. Positions 296 to 310 are enriched in basic and acidic residues; it reads TDRGVDQRDGKERSD. The disordered stretch occupies residues 296-325; it reads TDRGVDQRDGKERSDSPGCEESDANKEENL.

This sequence belongs to the peptidase C14A family. Heterotetramer that consists of two anti-parallel arranged heterodimers, each one formed by a p18 subunit and a p12 subunit.

It carries out the reaction Strict requirement for an Asp residue at P1, with 316-Asp being essential for proteolytic activity and has a preferred cleavage sequence of Val-Asp-Val-Ala-Asp-|-.. In terms of biological role, involved in the activation cascade of caspases responsible for apoptosis execution. Might function by either activating some proteins required for cell death or inactivating proteins necessary for cell survival. The chain is Caspase-2 (CASP2) from Gallus gallus (Chicken).